Reading from the N-terminus, the 312-residue chain is Methionyl-tRNA formyltransferase (312 aa).

112-115 serves as a coordination point for (6S)-5,6,7,8-tetrahydrofolate; sequence SLLP.

The protein belongs to the Fmt family.

The catalysed reaction is L-methionyl-tRNA(fMet) + (6R)-10-formyltetrahydrofolate = N-formyl-L-methionyl-tRNA(fMet) + (6S)-5,6,7,8-tetrahydrofolate + H(+). Attaches a formyl group to the free amino group of methionyl-tRNA(fMet). The formyl group appears to play a dual role in the initiator identity of N-formylmethionyl-tRNA by promoting its recognition by IF2 and preventing the misappropriation of this tRNA by the elongation apparatus. This chain is Methionyl-tRNA formyltransferase, found in Magnetococcus marinus (strain ATCC BAA-1437 / JCM 17883 / MC-1).